We begin with the raw amino-acid sequence, 920 residues long: Plasma membrane ATPase (920 aa).

A compositionally biased stretch (basic and acidic residues) spans 1-11; that stretch reads MSDERITEKPP. Residues 1–71 are disordered; the sequence is MSDERITEKP…AEEDDGPAAA (71 aa). Residues 1 to 117 are Cytoplasmic-facing; the sequence is MSDERITEKP…REESENLLVK (117 aa). Positions 17–50 are enriched in acidic residues; the sequence is SEGEPVPEEEVEEETEEEVPDEQSSEDDDIDGLI. Residues 118–138 form a helical membrane-spanning segment; the sequence is FLMFFIGPIQFVMEAAAVLAA. Topologically, residues 139–142 are extracellular; it reads GLED. A helical transmembrane segment spans residues 143-162; it reads WVDFGVICGLLFLNAGVGFI. Residues 163-293 are Cytoplasmic-facing; the sequence is QEFQAGSIVE…GQGHFTEVLN (131 aa). Residues 294-315 traverse the membrane as a helical segment; sequence GIGVILLVLVVITLLLIWTACF. Topologically, residues 316-326 are extracellular; that stretch reads YRTVRIVPILR. The chain crosses the membrane as a helical span at residues 327 to 349; sequence YTLGITIVGVPVGLPAVVTTTMA. The Cytoplasmic portion of the chain corresponds to 350 to 721; the sequence is GGAAYLAKKQ…IAILNHSLDI (372 aa). The active-site 4-aspartylphosphate intermediate is the aspartate 380. Residues aspartate 636 and aspartate 640 each contribute to the Mg(2+) site. The helical transmembrane segment at 722-740 threads the bilayer; that stretch reads DLIVFIAIFADVATLAIAY. Topologically, residues 741 to 756 are extracellular; sequence DNAPFSPSPVKWNLPR. The helical transmembrane segment at 757–776 threads the bilayer; the sequence is LWGMSIMMGIILAAGTWITL. Over 777-826 the chain is Cytoplasmic; it reads TTMFLPKGGIIQNFGSIDGILFLEISLTENWLIFITRAVGPFWSSIPSWQ. Residues 827-847 traverse the membrane as a helical segment; that stretch reads LAGAVFVVDVVATMFTLFGWW. Residues 848 to 859 are Extracellular-facing; it reads SQNWTDIVTVVR. A helical transmembrane segment spans residues 860–876; sequence IYIWSIGIFCCLGGAYY. The Cytoplasmic segment spans residues 877–920; it reads LMSESETFDRLMNGKPLKENKSTRSVEDFLASMRRVSTQHEKGN.

The protein belongs to the cation transport ATPase (P-type) (TC 3.A.3) family. Type IIIA subfamily.

It localises to the cell membrane. The catalysed reaction is ATP + H2O + H(+)(in) = ADP + phosphate + 2 H(+)(out). In terms of biological role, the plasma membrane ATPase of plants and fungi is a hydrogen ion pump. The proton gradient it generates drives the active transport of nutrients by H(+)-symport. The resulting external acidification and/or internal alkinization may mediate growth responses. In Zygosaccharomyces rouxii, this protein is Plasma membrane ATPase.